The following is a 537-amino-acid chain: Bifunctional NAD(P)H-hydrate repair enzyme Nnr (537 aa).

Residues 1–227 (MLGRPVFGLG…PPEAEVYVGP (227 aa)) form an NAD(P)H-hydrate epimerase region. The region spanning 13 to 223 (ITSVDVAVID…SIGAPPEAEV (211 aa)) is the YjeF N-terminal domain. Positions 65 to 69 (GNGGD) are NADPHX 1; for epimerase activity. Residues Asn66 and Asp135 each contribute to the K(+) site. The segment at 139 to 145 (GTGLRGA) is NADPHX 1; for epimerase activity. Tyr150 and Asp168 together coordinate (6S)-NADPHX. Residue Ser171 coordinates K(+). The YjeF C-terminal domain maps to 226-508 (GPGDVAYRVR…EKIPEALNNP (283 aa)). Positions 227-537 (PGDVAYRVRP…WQPPVGRSES (311 aa)) are ADP-dependent (S)-NAD(P)H-hydrate dehydratase. Residue Gly329 participates in (6S)-NADPHX binding. The tract at residues 381–387 (HQREFQI) is NADPHX 2; for dehydratase activity. ADP contacts are provided by residues 421–425 (KGPID) and 440–449 (VPAMSVGGTG). Asp450 is a (6S)-NADPHX binding site.

The protein in the N-terminal section; belongs to the NnrE/AIBP family. In the C-terminal section; belongs to the NnrD/CARKD family. K(+) is required as a cofactor.

It carries out the reaction (6S)-NADHX + ADP = AMP + phosphate + NADH + H(+). The enzyme catalyses (6S)-NADPHX + ADP = AMP + phosphate + NADPH + H(+). The catalysed reaction is (6R)-NADHX = (6S)-NADHX. It catalyses the reaction (6R)-NADPHX = (6S)-NADPHX. In terms of biological role, bifunctional enzyme that catalyzes the epimerization of the S- and R-forms of NAD(P)HX and the dehydration of the S-form of NAD(P)HX at the expense of ADP, which is converted to AMP. This allows the repair of both epimers of NAD(P)HX, a damaged form of NAD(P)H that is a result of enzymatic or heat-dependent hydration. The chain is Bifunctional NAD(P)H-hydrate repair enzyme Nnr (nnr) from Hyperthermus butylicus (strain DSM 5456 / JCM 9403 / PLM1-5).